The following is a 190-amino-acid chain: Scytalone dehydratase-like protein Arp1 (190 aa).

Tyr67 contributes to the substrate binding site. Catalysis depends on residues His102 and His127. Residue Asn148 participates in substrate binding.

Belongs to the scytalone dehydratase family. As to quaternary structure, homotrimer. Each subunit contains an active site, located in the central part of the hydrophobic core of the monomer, which functions independently.

Its function is as follows. Scytalone dehydratase-like protein; part of the Pks2 gene cluster that mediates the formation of infectious structures (appressoria), enabling these fungi to kill insects faster. The product of the Pks2 gene cluster is different from the one of Pks1 and has still not been identified. The polypeptide is Scytalone dehydratase-like protein Arp1 (Metarhizium anisopliae (strain ARSEF 549)).